Reading from the N-terminus, the 596-residue chain is Inactive metallocarboxypeptidase ECM14 (596 aa).

Positions 1-22 are cleaved as a signal peptide; the sequence is MHFSVRLSLFLTLASSLPLVSA. The propeptide occupies 23–184; sequence VPQHEDQAYT…QTIYESYPKA (162 aa). The interval 182–211 is disordered; the sequence is PKAGSASPSQQGPTTRRFSPSASTSKSKPH. Residues 187 to 207 are compositionally biased toward polar residues; sequence ASPSQQGPTTRRFSPSASTSK. One can recognise a Peptidase M14 domain in the interval 220–546; the sequence is DYQPLSVLLP…RAMVAMGKFL (327 aa). Zn(2+) contacts are provided by histidine 285 and glutamate 288. Residues 285 to 288, arginine 343, and 360 to 361 contribute to the substrate site; these read HARE and DH. An intrachain disulfide couples cysteine 354 to cysteine 377. Asparagine 370 carries N-linked (GlcNAc...) asparagine glycosylation. Residue histidine 417 participates in Zn(2+) binding. 418 to 419 contributes to the substrate binding site; it reads SY. A disordered region spans residues 557–596; that stretch reads DGLRASEEPQDYDNDLEDGEDDKDEQGSTVFRAQADDLQS. A compositionally biased stretch (acidic residues) spans 564–580; that stretch reads EPQDYDNDLEDGEDDKD. Residues 583–596 show a composition bias toward polar residues; the sequence is GSTVFRAQADDLQS.

Belongs to the peptidase M14 family. Requires Zn(2+) as cofactor.

The protein resides in the vacuole. The protein localises to the secreted. Inactive carboxypeptidase that may play a role in cell wall organization and biogenesis. In Arthroderma benhamiae (strain ATCC MYA-4681 / CBS 112371) (Trichophyton mentagrophytes), this protein is Inactive metallocarboxypeptidase ECM14 (ECM14).